Consider the following 427-residue polypeptide: MELLKALLLLSGVLGALAEFCVIPKMDGQLVEKLGQRLLPWMDRLSSEQLNPSIYVGLRLSSMQAGTKENLYLHNLKLHYQQCLLRSTSSDDNSGCQTKISGGSLALYLLALRANCELLGSRKGDRMVSQLKWFLEDEKKAIGHHHEGHPHTSYYQYGLSILALCVHRKRVHDSVVGKLLYAVEHDYFTYQGHLSVDTEAMAGLAFTCLERFNFNSDLRPRITTAIETVREKILKAQAPEGYFGNIYSTPLALQMLMTSPGVGLGPACLKARKSLLLSLQDGAFQNPMMISQLLPVLNHKTYLNLISPDCQAPRVMLVPATEDPVHLSEVSVTLKVSSVLPPYERTVSVFAGASLEDVLNRARDLGEFTYGTQASLSGPYLTSVLGKEAGDREYWQLLRVPDTPLLQGIADYKPKNGETIELRLVKM.

An N-terminal signal peptide occupies residues 1 to 18; that stretch reads MELLKALLLLSGVLGALA. Cystine bridges form between Cys-21-Cys-268, Cys-116-Cys-310, and Cys-165-Cys-208. Cob(II)alamin is bound by residues 152 to 156, His-193, 193 to 197, Asn-245, Ser-248, Gln-292, and 395 to 397; these read TSYYQ, HLSVD, and WQL.

This sequence belongs to the eukaryotic cobalamin transport proteins family. As to quaternary structure, interacts with CD320 (via LDL-receptor class A domains).

It is found in the secreted. Its function is as follows. Primary vitamin B12-binding and transport protein. Delivers cobalamin to cells. The chain is Transcobalamin-2 (Tcn2) from Rattus norvegicus (Rat).